The sequence spans 420 residues: 3-isopropylmalate dehydratase large subunit (420 aa).

Residues cysteine 300, cysteine 360, and cysteine 363 each coordinate [4Fe-4S] cluster.

The protein belongs to the aconitase/IPM isomerase family. LeuC type 2 subfamily. As to quaternary structure, heterodimer of LeuC and LeuD. [4Fe-4S] cluster is required as a cofactor.

The enzyme catalyses (2R,3S)-3-isopropylmalate = (2S)-2-isopropylmalate. Its pathway is amino-acid biosynthesis; L-leucine biosynthesis; L-leucine from 3-methyl-2-oxobutanoate: step 2/4. Catalyzes the isomerization between 2-isopropylmalate and 3-isopropylmalate, via the formation of 2-isopropylmaleate. The sequence is that of 3-isopropylmalate dehydratase large subunit from Halothermothrix orenii (strain H 168 / OCM 544 / DSM 9562).